The chain runs to 193 residues: Acyl carrier protein phosphodiesterase (193 aa).

It belongs to the AcpH family.

The enzyme catalyses holo-[ACP] + H2O = apo-[ACP] + (R)-4'-phosphopantetheine + H(+). Its function is as follows. Converts holo-ACP to apo-ACP by hydrolytic cleavage of the phosphopantetheine prosthetic group from ACP. This is Acyl carrier protein phosphodiesterase from Escherichia coli O6:K15:H31 (strain 536 / UPEC).